Consider the following 342-residue polypeptide: Ferredoxin--NADP reductase (342 aa).

The FAD site is built by cysteine 17, aspartate 36, glutamine 44, tyrosine 49, isoleucine 89, phenylalanine 124, aspartate 289, and threonine 330.

It belongs to the ferredoxin--NADP reductase type 2 family. In terms of assembly, homodimer. The cofactor is FAD.

The catalysed reaction is 2 reduced [2Fe-2S]-[ferredoxin] + NADP(+) + H(+) = 2 oxidized [2Fe-2S]-[ferredoxin] + NADPH. The chain is Ferredoxin--NADP reductase from Rhodopseudomonas palustris (strain BisA53).